The sequence spans 424 residues: Enolase (424 aa).

Gln163 lines the (2R)-2-phosphoglycerate pocket. The active-site Proton donor is Glu205. 3 residues coordinate Mg(2+): Asp242, Glu285, and Asp312. (2R)-2-phosphoglycerate contacts are provided by Lys337, Arg366, Ser367, and Lys388. Lys337 serves as the catalytic Proton acceptor.

Belongs to the enolase family. It depends on Mg(2+) as a cofactor.

Its subcellular location is the cytoplasm. The protein resides in the secreted. It is found in the cell surface. The catalysed reaction is (2R)-2-phosphoglycerate = phosphoenolpyruvate + H2O. It functions in the pathway carbohydrate degradation; glycolysis; pyruvate from D-glyceraldehyde 3-phosphate: step 4/5. Its function is as follows. Catalyzes the reversible conversion of 2-phosphoglycerate (2-PG) into phosphoenolpyruvate (PEP). It is essential for the degradation of carbohydrates via glycolysis. This Sphingopyxis alaskensis (strain DSM 13593 / LMG 18877 / RB2256) (Sphingomonas alaskensis) protein is Enolase.